We begin with the raw amino-acid sequence, 420 residues long: Tyrosine--tRNA ligase (420 aa).

Residue Tyr38 participates in L-tyrosine binding. The 'HIGH' region signature appears at 43–52; sequence PTGDSLHIGH. L-tyrosine is bound by residues Tyr169 and Gln173. Positions 231-235 match the 'KMSKS' region motif; that stretch reads KFGKS. Lys234 is a binding site for ATP. The S4 RNA-binding domain maps to 353-419; it reads KNIVEFLVET…GKRKYTLVKI (67 aa).

The protein belongs to the class-I aminoacyl-tRNA synthetase family. TyrS type 1 subfamily. In terms of assembly, homodimer.

The protein localises to the cytoplasm. It catalyses the reaction tRNA(Tyr) + L-tyrosine + ATP = L-tyrosyl-tRNA(Tyr) + AMP + diphosphate + H(+). Its function is as follows. Catalyzes the attachment of tyrosine to tRNA(Tyr) in a two-step reaction: tyrosine is first activated by ATP to form Tyr-AMP and then transferred to the acceptor end of tRNA(Tyr). The sequence is that of Tyrosine--tRNA ligase from Lactobacillus johnsonii (strain CNCM I-12250 / La1 / NCC 533).